Reading from the N-terminus, the 365-residue chain is tRNA-specific 2-thiouridylase MnmA (365 aa).

ATP contacts are provided by residues 14–21 (AMSGGVDS) and Leu40. Cys108 acts as the Nucleophile in catalysis. The cysteines at positions 108 and 204 are disulfide-linked. Gly132 contacts ATP. The segment at 154-156 (KDQ) is interaction with tRNA. Cys204 functions as the Cysteine persulfide intermediate in the catalytic mechanism.

Belongs to the MnmA/TRMU family.

It localises to the cytoplasm. It carries out the reaction S-sulfanyl-L-cysteinyl-[protein] + uridine(34) in tRNA + AH2 + ATP = 2-thiouridine(34) in tRNA + L-cysteinyl-[protein] + A + AMP + diphosphate + H(+). Catalyzes the 2-thiolation of uridine at the wobble position (U34) of tRNA, leading to the formation of s(2)U34. This chain is tRNA-specific 2-thiouridylase MnmA, found in Rickettsia felis (strain ATCC VR-1525 / URRWXCal2) (Rickettsia azadi).